We begin with the raw amino-acid sequence, 261 residues long: MRVLLTNDDGFDSVGMRVLRDVVSGHFAEVWVSAPARDCSAASRALSVRTPIKTHMRGEREFVVHGTPADSAVIGICEMTSTGKRPDLVISGINYGANTGFTVPYSGTIAAAAAAFDIGVPAIAISQQYNGKRCDNNVETSWQNSRKSVMALVSRLLRDTMWHGKCIMSINVPYSDVQGVKFAGHSCDDGHIKWDGPSMERREITSGDGRCVSYVFDDMRSPNSNDNASDTQLLEQGYIVVTPIGHSMTDHATLDKYCGLQ.

Residues aspartate 8, aspartate 9, serine 40, and asparagine 94 each contribute to the a divalent metal cation site.

The protein belongs to the SurE nucleotidase family. The cofactor is a divalent metal cation.

The protein localises to the cytoplasm. The catalysed reaction is a ribonucleoside 5'-phosphate + H2O = a ribonucleoside + phosphate. Its function is as follows. Nucleotidase that shows phosphatase activity on nucleoside 5'-monophosphates. This Anaplasma marginale (strain Florida) protein is 5'-nucleotidase SurE.